The chain runs to 229 residues: MTDAKMKKKRTTPFLYLASIVFLPWWISLFFKKSLESWVTNWLNISQSEPFLNDIQEKSLIEKFIELEELLLLDEMIKECPKLDLQKFRIGIHKETIQLMNMYNDDRIHTILHFSTNIISFVILSVCSILGNEELVILNSWIKEFLYNLSDTLKAFCLLALTDFLFGFHTISAWELLIGSVVHNDQMRSLLVCLFPSVLHTIYYFWTFNYLNCVSPSLVVLYDSLVDVD.

Transmembrane regions (helical) follow at residues 11–31 (TTPF…SLFF), 118–138 (IISF…LVIL), 158–178 (LLAL…ELLI), and 190–210 (LLVC…TFNY).

Belongs to the CemA family.

The protein resides in the plastid. It localises to the chloroplast inner membrane. The enzyme catalyses K(+)(in) + H(+)(out) = K(+)(out) + H(+)(in). In terms of biological role, contributes to K(+)/H(+) antiport activity by supporting proton efflux to control proton extrusion and homeostasis in chloroplasts in a light-dependent manner to modulate photosynthesis. Prevents excessive induction of non-photochemical quenching (NPQ) under continuous-light conditions. Indirectly promotes efficient inorganic carbon uptake into chloroplasts. The chain is Potassium/proton antiporter CemA from Pelargonium hortorum (Common geranium).